Consider the following 128-residue polypeptide: Glycine cleavage system H protein (128 aa).

A Lipoyl-binding domain is found at 23–105 (KVRIGITDFA…YEKAWMIVVE (83 aa)). The residue at position 64 (Lys64) is an N6-lipoyllysine.

The protein belongs to the GcvH family. As to quaternary structure, the glycine cleavage system is composed of four proteins: P, T, L and H. The cofactor is (R)-lipoate.

In terms of biological role, the glycine cleavage system catalyzes the degradation of glycine. The H protein shuttles the methylamine group of glycine from the P protein to the T protein. Is also involved in protein lipoylation via its role as an octanoyl/lipoyl carrier protein intermediate. This chain is Glycine cleavage system H protein, found in Halalkalibacterium halodurans (strain ATCC BAA-125 / DSM 18197 / FERM 7344 / JCM 9153 / C-125) (Bacillus halodurans).